The primary structure comprises 877 residues: Probable linoleate 9S-lipoxygenase 4 (877 aa).

In terms of domain architecture, PLAT spans glycine 38 to alanine 165. In terms of domain architecture, Lipoxygenase spans threonine 168–isoleucine 877. Residues glycine 229 to threonine 252 are disordered. Fe cation contacts are provided by histidine 528, histidine 533, histidine 719, asparagine 723, and isoleucine 877.

The protein belongs to the lipoxygenase family. Fe cation is required as a cofactor.

The catalysed reaction is (9Z,12Z)-octadecadienoate + O2 = (9S)-hydroperoxy-(10E,12Z)-octadecadienoate. It functions in the pathway lipid metabolism; oxylipin biosynthesis. Plant lipoxygenase may be involved in a number of diverse aspects of plant physiology including growth and development, pest resistance, and senescence or responses to wounding. Catalyzes the hydroperoxidation of lipids containing a cis,cis-1,4-pentadiene structure. This is Probable linoleate 9S-lipoxygenase 4 from Oryza sativa subsp. japonica (Rice).